The primary structure comprises 524 residues: Glutamyl-tRNA(Gln) amidotransferase subunit A, mitochondrial (524 aa).

Active-site charge relay system residues include Lys-76 and Ser-171. Ser-195 serves as the catalytic Acyl-ester intermediate.

Belongs to the amidase family. GatA subfamily. Subunit of the heterotrimeric GatCAB amidotransferase (AdT) complex, composed of A (qrsl1), B (gatb) and C (gatc) subunits.

The protein resides in the mitochondrion. It carries out the reaction L-glutamyl-tRNA(Gln) + L-glutamine + ATP + H2O = L-glutaminyl-tRNA(Gln) + L-glutamate + ADP + phosphate + H(+). In terms of biological role, allows the formation of correctly charged Gln-tRNA(Gln) through the transamidation of misacylated Glu-tRNA(Gln) in the mitochondria. The reaction takes place in the presence of glutamine and ATP through an activated gamma-phospho-Glu-tRNA(Gln). This chain is Glutamyl-tRNA(Gln) amidotransferase subunit A, mitochondrial (qrsl1), found in Xenopus laevis (African clawed frog).